Consider the following 427-residue polypeptide: Mitochondrial fission protein ELM1 (427 aa).

As to quaternary structure, interacts with DRP3 and DRP3B.

The protein localises to the mitochondrion outer membrane. Plant-specific factor involved in mitochondria fission. Is required for the correct localization of DRP3A from the cytosol to mitochondrial fission sites. Does not seem to be required for peroxisomal division. This chain is Mitochondrial fission protein ELM1 (ELM1), found in Arabidopsis thaliana (Mouse-ear cress).